Reading from the N-terminus, the 381-residue chain is Queuine tRNA-ribosyltransferase (381 aa).

The active-site Proton acceptor is D92. Residues 92–96, D146, Q190, and G217 each bind substrate; that span reads DSGGF. An RNA binding region spans residues 248–254; sequence GVGRPED. D267 serves as the catalytic Nucleophile. Residues 272-276 are RNA binding; important for wobble base 34 recognition; sequence TRNAR. Residues C305, C307, C310, and H337 each coordinate Zn(2+).

The protein belongs to the queuine tRNA-ribosyltransferase family. Homodimer. Within each dimer, one monomer is responsible for RNA recognition and catalysis, while the other monomer binds to the replacement base PreQ1. Zn(2+) serves as cofactor.

It catalyses the reaction 7-aminomethyl-7-carbaguanine + guanosine(34) in tRNA = 7-aminomethyl-7-carbaguanosine(34) in tRNA + guanine. It participates in tRNA modification; tRNA-queuosine biosynthesis. In terms of biological role, catalyzes the base-exchange of a guanine (G) residue with the queuine precursor 7-aminomethyl-7-deazaguanine (PreQ1) at position 34 (anticodon wobble position) in tRNAs with GU(N) anticodons (tRNA-Asp, -Asn, -His and -Tyr). Catalysis occurs through a double-displacement mechanism. The nucleophile active site attacks the C1' of nucleotide 34 to detach the guanine base from the RNA, forming a covalent enzyme-RNA intermediate. The proton acceptor active site deprotonates the incoming PreQ1, allowing a nucleophilic attack on the C1' of the ribose to form the product. After dissociation, two additional enzymatic reactions on the tRNA convert PreQ1 to queuine (Q), resulting in the hypermodified nucleoside queuosine (7-(((4,5-cis-dihydroxy-2-cyclopenten-1-yl)amino)methyl)-7-deazaguanosine). The sequence is that of Queuine tRNA-ribosyltransferase from Xanthomonas axonopodis pv. citri (strain 306).